A 941-amino-acid polypeptide reads, in one-letter code: ATP-dependent 6-phosphofructokinase subunit beta (941 aa).

The segment at P2–S558 is N-terminal catalytic PFK domain 1. ATP contacts are provided by residues G191, R255–C256, and G285–S288. Residue D286 coordinates Mg(2+). Residues S331–D333, R368, M375–R377, E432, R460, and H466–R469 each bind beta-D-fructose 6-phosphate. D333 (proton acceptor) is an active-site residue. The tract at residues A559–K572 is interdomain linker. Residues K573–L941 are C-terminal regulatory PFK domain 2. Residues R643, T701–N705, R739, Q746–G748, E806, K832, H838–Q841, and R918 each bind beta-D-fructose 2,6-bisphosphate.

The protein belongs to the phosphofructokinase type A (PFKA) family. ATP-dependent PFK group I subfamily. Eukaryotic two domain clade 'E' sub-subfamily. In terms of assembly, heterododecamer of 4 alpha, 4 beta and 4 gamma chains. The gamma chain bridges the N-terminal halves of the alpha and beta subunits. Mg(2+) is required as a cofactor.

It is found in the cytoplasm. It catalyses the reaction beta-D-fructose 6-phosphate + ATP = beta-D-fructose 1,6-bisphosphate + ADP + H(+). It participates in carbohydrate degradation; glycolysis; D-glyceraldehyde 3-phosphate and glycerone phosphate from D-glucose: step 3/4. Allosterically activated by ADP, AMP, or fructose 2,6-bisphosphate, and allosterically inhibited by ATP or citrate. In terms of biological role, catalyzes the phosphorylation of D-fructose 6-phosphate to fructose 1,6-bisphosphate by ATP, the first committing step of glycolysis. In Komagataella phaffii (strain GS115 / ATCC 20864) (Yeast), this protein is ATP-dependent 6-phosphofructokinase subunit beta (PFK2).